The primary structure comprises 1028 residues: Contactin-3 (1028 aa).

An N-terminal signal peptide occupies residues Met-1–Gly-19. Ig-like C2-type domains follow at residues Pro-32 to Gln-117, Glu-122 to Gly-209, Pro-227 to Thr-313, Pro-318 to Lys-402, Pro-408 to Thr-497, and Pro-499 to Ile-593. Disulfide bonds link Cys-50-Cys-100, Cys-144-Cys-196, Cys-249-Cys-297, Cys-339-Cys-386, and Cys-431-Cys-479. Residues Asn-65 and Asn-193 are each glycosylated (N-linked (GlcNAc...) asparagine). N-linked (GlcNAc...) asparagine glycans are attached at residues Asn-377, Asn-468, and Asn-489. Cys-521 and Cys-577 are oxidised to a cystine. Fibronectin type-III domains follow at residues Pro-600–Ala-698, Ala-703–Glu-800, Ala-805–Thr-901, and Pro-902–Asp-998. The segment at Gly-684–Arg-714 is disordered. N-linked (GlcNAc...) asparagine glycans are attached at residues Asn-765, Asn-860, Asn-895, Asn-913, Asn-931, and Asn-956. The GPI-anchor amidated serine moiety is linked to residue Ser-1002. The propeptide at Thr-1003–Trp-1028 is removed in mature form.

It belongs to the immunoglobulin superfamily. Contactin family. As to quaternary structure, interacts with PTPRG. As to expression, specifically expressed in brain. Ectopically expressed in tumors expressing endogenous intracisternal A-type particles (IAPs).

The protein localises to the cell membrane. In terms of biological role, contactins mediate cell surface interactions during nervous system development. Has some neurite outgrowth-promoting activity. This Mus musculus (Mouse) protein is Contactin-3 (Cntn3).